We begin with the raw amino-acid sequence, 487 residues long: Ribosomal protein uS12 methylthiotransferase RimO (487 aa).

The region spanning 38-149 is the MTTase N-terminal domain; sequence PTVAFAHLGC…IVEVLEQVEA (112 aa). Cys47, Cys83, Cys112, Cys187, Cys191, and Cys194 together coordinate [4Fe-4S] cluster. In terms of domain architecture, Radical SAM core spans 173-402; it reads TTSEAVAYLK…MEAQQAISAE (230 aa). The region spanning 405-476 is the TRAM domain; it reads GAWVGRIVDV…IYDLEGEVVG (72 aa).

It belongs to the methylthiotransferase family. RimO subfamily. [4Fe-4S] cluster serves as cofactor.

The protein localises to the cytoplasm. The catalysed reaction is L-aspartate(89)-[ribosomal protein uS12]-hydrogen + (sulfur carrier)-SH + AH2 + 2 S-adenosyl-L-methionine = 3-methylsulfanyl-L-aspartate(89)-[ribosomal protein uS12]-hydrogen + (sulfur carrier)-H + 5'-deoxyadenosine + L-methionine + A + S-adenosyl-L-homocysteine + 2 H(+). Functionally, catalyzes the methylthiolation of an aspartic acid residue of ribosomal protein uS12. This Synechococcus sp. (strain RCC307) protein is Ribosomal protein uS12 methylthiotransferase RimO.